Here is a 195-residue protein sequence, read N- to C-terminus: Imidazoleglycerol-phosphate dehydratase (195 aa).

Belongs to the imidazoleglycerol-phosphate dehydratase family.

The protein localises to the cytoplasm. The enzyme catalyses D-erythro-1-(imidazol-4-yl)glycerol 3-phosphate = 3-(imidazol-4-yl)-2-oxopropyl phosphate + H2O. It functions in the pathway amino-acid biosynthesis; L-histidine biosynthesis; L-histidine from 5-phospho-alpha-D-ribose 1-diphosphate: step 6/9. This Ruegeria sp. (strain TM1040) (Silicibacter sp.) protein is Imidazoleglycerol-phosphate dehydratase.